A 241-amino-acid chain; its full sequence is 15,16-dihydrobiliverdin:ferredoxin oxidoreductase (241 aa).

The disordered stretch occupies residues 16–35; the sequence is RGGQPAAVPEGLEHCHSSKS.

This sequence belongs to the HY2 family.

It carries out the reaction 15,16-dihydrobiliverdin + oxidized 2[4Fe-4S]-[ferredoxin] = biliverdin IXalpha + reduced 2[4Fe-4S]-[ferredoxin] + 2 H(+). Its function is as follows. Catalyzes the two-electron reduction of biliverdin IX-alpha at the C15 methine bridge. This Synechococcus sp. (strain WH7803) protein is 15,16-dihydrobiliverdin:ferredoxin oxidoreductase.